We begin with the raw amino-acid sequence, 174 residues long: MNYFELFKFPPTFDIDTAVLADRYRELQRAVHPDKFANDTEQQRLLSVQRTAQVNDGYQTLKDPIRRAEHMLSLRGIDLSHETTTVKDTAFLMQQMEWREALEDIRESIDHQAIINELYDSFAAYRLKLTKLLAAQLSSGSDEDALLAADQVRKLKFMAKLQDELTRIEDALLD.

Positions 2-74 constitute a J domain; the sequence is NYFELFKFPP…IRRAEHMLSL (73 aa).

The protein belongs to the HscB family. Interacts with HscA and stimulates its ATPase activity.

Its function is as follows. Co-chaperone involved in the maturation of iron-sulfur cluster-containing proteins. Seems to help targeting proteins to be folded toward HscA. This chain is Co-chaperone protein HscB homolog, found in Shewanella oneidensis (strain ATCC 700550 / JCM 31522 / CIP 106686 / LMG 19005 / NCIMB 14063 / MR-1).